An 86-amino-acid polypeptide reads, in one-letter code: Cell division topological specificity factor (86 aa).

It belongs to the MinE family.

In terms of biological role, prevents the cell division inhibition by proteins MinC and MinD at internal division sites while permitting inhibition at polar sites. This ensures cell division at the proper site by restricting the formation of a division septum at the midpoint of the long axis of the cell. In Stenotrophomonas maltophilia (strain K279a), this protein is Cell division topological specificity factor.